A 260-amino-acid polypeptide reads, in one-letter code: Small ribosomal subunit protein eS1 (260 aa).

A2 carries the N-acetylalanine; partial modification.

The protein belongs to the eukaryotic ribosomal protein eS1 family. Component of the small ribosomal subunit. Mature ribosomes consist of a small (40S) and a large (60S) subunit. The 40S subunit contains about 33 different proteins and 1 molecule of RNA (18S). The 60S subunit contains about 49 different proteins and 3 molecules of RNA (25S, 5.8S and 5S).

It localises to the cytoplasm. This Mycosarcoma maydis (Corn smut fungus) protein is Small ribosomal subunit protein eS1.